Here is a 337-residue protein sequence, read N- to C-terminus: Ornithine carbamoyltransferase, catabolic (337 aa).

Residues 57-60 (STRT), Gln84, Arg108, and 135-138 (HPTQ) each bind carbamoyl phosphate. L-ornithine-binding positions include Asn167, Asp231, and 235–236 (SM). Residues 272–273 (CL) and Arg317 contribute to the carbamoyl phosphate site.

This sequence belongs to the aspartate/ornithine carbamoyltransferase superfamily. OTCase family.

It localises to the cytoplasm. It catalyses the reaction carbamoyl phosphate + L-ornithine = L-citrulline + phosphate + H(+). Its pathway is amino-acid degradation; L-arginine degradation via ADI pathway; carbamoyl phosphate from L-arginine: step 2/2. Its function is as follows. Reversibly catalyzes the transfer of the carbamoyl group from carbamoyl phosphate (CP) to the N(epsilon) atom of ornithine (ORN) to produce L-citrulline. This Streptococcus agalactiae protein is Ornithine carbamoyltransferase, catabolic (arcB).